The sequence spans 80 residues: MDTKTLIDKYNIENFTNYINFIIRNHQAGKGNLRFLVNLLKTTGGSNLKELDINPVEIENFNIDIYLDFLEFCLDSKFIF.

In terms of assembly, self-associates.

The chain is Protein P9 from Beta vulgaris (Sugar beet).